Here is a 545-residue protein sequence, read N- to C-terminus: Probable quinate permease (545 aa).

The Cytoplasmic portion of the chain corresponds to 1–22 (MSILSLVEDRPTPKEVYNWRIY). The chain crosses the membrane as a helical span at residues 23–43 (LLAAVASFTSCMIGYDSAFIG). The Extracellular segment spans residues 44 to 66 (TTISLQSFKDEFNWDAMSTDKQN). Residues 67 to 87 (LISANIVSLYQAGAFFGAFFA) traverse the membrane as a helical segment. The Cytoplasmic segment spans residues 88–97 (YPMGHFWGRR). A helical membrane pass occupies residues 98 to 118 (WGLFVAALVFTLGAGLMLGAN). At 119-130 (GDRGLGLIYGGR) the chain is on the extracellular side. A helical transmembrane segment spans residues 131–151 (VLAGLGVGAGSNITPIYISEL). At 152 to 159 (APPAIRGR) the chain is on the cytoplasmic side. Residues 160–180 (LVGVYELGWQIGGLVGFWICF) form a helical membrane-spanning segment. Topologically, residues 181–193 (GVDDTLAPSHKQW) are extracellular. The chain crosses the membrane as a helical span at residues 194-214 (IIPFAVQLIPSGLLLLGILFV). Residues 215–285 (RESPRWLFLR…VWSNKRIMYR (71 aa)) are Cytoplasmic-facing. The chain crosses the membrane as a helical span at residues 286 to 306 (LFLGSMLFLWQNGSGINAINY). At 307–325 (YSPTVFKSIGLRGANTSLL) the chain is on the extracellular side. Residues 326 to 346 (TTGIFGVVKTVVTFVWLLWLI) traverse the membrane as a helical segment. Residues 347–352 (DRLGRR) are Cytoplasmic-facing. The chain crosses the membrane as a helical span at residues 353–373 (LLLMIGAAGGSVCLWIVGAYI). Over 374–384 (KVAKPTERDPD) the chain is Extracellular. Residues 385-405 (APLDGGGIAAMFFFYLWTVFY) traverse the membrane as a helical segment. Topologically, residues 406–457 (TPSWNGTPWVMNSEMFDPNVRSLAQACAAGSNWLWNFLISRFTPQMFAKMEY) are cytoplasmic. The chain crosses the membrane as a helical span at residues 458–478 (GVYFFFASLMILSIVFVFFLI). Topologically, residues 479–545 (PETKGIPLES…VEQAESVPKA (67 aa)) are extracellular. The interval 520 to 545 (IEESGYTKSDAQQVERVEQAESVPKA) is disordered.

The protein belongs to the major facilitator superfamily. Sugar transporter (TC 2.A.1.1) family. In terms of assembly, interacts with creB. Post-translationally, ubiquitinated. Deubiquitinated by creB, probably to control its activity or amount.

It localises to the cell membrane. Its function is as follows. Integral membrane transporter that imports quinic acid to be catabolized as a carbon source. The sequence is that of Probable quinate permease (qutD) from Aspergillus terreus (strain NIH 2624 / FGSC A1156).